Reading from the N-terminus, the 219-residue chain is MAEISAKMVQELREKTGAGMMDCKKALTEAGGDLAKAEEVLRKKGLSAAAKKTGRAATEGAVASYIHMGGKIGVLVEVNCETDFVARTEGFQGLVKEIAMQIAAASPRWVRREEVPADVVAKELEIAKAQAREQKKPEAILEKIATGKVEKFYSEFCLMEQAWVKDDKKKIQDVLTDAVAKIGENIQIRRFARFVLGEGLEKKQENLAEEVAKAAGLQK.

The tract at residues 82–85 (TDFV) is involved in Mg(2+) ion dislocation from EF-Tu.

Belongs to the EF-Ts family.

The protein localises to the cytoplasm. Functionally, associates with the EF-Tu.GDP complex and induces the exchange of GDP to GTP. It remains bound to the aminoacyl-tRNA.EF-Tu.GTP complex up to the GTP hydrolysis stage on the ribosome. In Anaeromyxobacter sp. (strain K), this protein is Elongation factor Ts.